The primary structure comprises 366 residues: Holliday junction branch migration complex subunit RuvB (366 aa).

The tract at residues 1–48 is disordered; sequence MIDRLMAREAIYQQSNPDPGGDPPEDGPPHGKNAADGGDEPDRGPDPD. The interval 21 to 212 is large ATPase domain (RuvB-L); sequence GDPPEDGPPH…FQIREHLGWY (192 aa). Residues leucine 51, arginine 52, glycine 93, lysine 96, threonine 97, threonine 98, 159-161, arginine 202, tyrosine 212, and arginine 249 each bind ATP; that span reads EDF. Threonine 97 is a binding site for Mg(2+). Positions 213–283 are small ATPAse domain (RuvB-S); the sequence is TRKELAEIVL…VCEAALDMIG (71 aa). Residues 286-366 form a head domain (RuvB-H) region; that stretch reads HLGLDKQDRN…KRQMPDRPLS (81 aa). Residues arginine 341, arginine 343, and arginine 346 each contribute to the DNA site.

It belongs to the RuvB family. Homohexamer. Forms an RuvA(8)-RuvB(12)-Holliday junction (HJ) complex. HJ DNA is sandwiched between 2 RuvA tetramers; dsDNA enters through RuvA and exits via RuvB. An RuvB hexamer assembles on each DNA strand where it exits the tetramer. Each RuvB hexamer is contacted by two RuvA subunits (via domain III) on 2 adjacent RuvB subunits; this complex drives branch migration. In the full resolvosome a probable DNA-RuvA(4)-RuvB(12)-RuvC(2) complex forms which resolves the HJ.

The protein resides in the cytoplasm. It carries out the reaction ATP + H2O = ADP + phosphate + H(+). The RuvA-RuvB-RuvC complex processes Holliday junction (HJ) DNA during genetic recombination and DNA repair, while the RuvA-RuvB complex plays an important role in the rescue of blocked DNA replication forks via replication fork reversal (RFR). RuvA specifically binds to HJ cruciform DNA, conferring on it an open structure. The RuvB hexamer acts as an ATP-dependent pump, pulling dsDNA into and through the RuvAB complex. RuvB forms 2 homohexamers on either side of HJ DNA bound by 1 or 2 RuvA tetramers; 4 subunits per hexamer contact DNA at a time. Coordinated motions by a converter formed by DNA-disengaged RuvB subunits stimulates ATP hydrolysis and nucleotide exchange. Immobilization of the converter enables RuvB to convert the ATP-contained energy into a lever motion, pulling 2 nucleotides of DNA out of the RuvA tetramer per ATP hydrolyzed, thus driving DNA branch migration. The RuvB motors rotate together with the DNA substrate, which together with the progressing nucleotide cycle form the mechanistic basis for DNA recombination by continuous HJ branch migration. Branch migration allows RuvC to scan DNA until it finds its consensus sequence, where it cleaves and resolves cruciform DNA. This is Holliday junction branch migration complex subunit RuvB from Rhodopirellula baltica (strain DSM 10527 / NCIMB 13988 / SH1).